We begin with the raw amino-acid sequence, 50 residues long: Sperm protamine P1 (50 aa).

Belongs to the protamine P1 family. Cross-linked by interchain disulfide bonds around the DNA-helix. As to expression, testis.

The protein resides in the nucleus. It is found in the chromosome. Functionally, protamines substitute for histones in the chromatin of sperm during the haploid phase of spermatogenesis. They compact sperm DNA into a highly condensed, stable and inactive complex. The protein is Sperm protamine P1 (PRM1) of Saguinus imperator (Emperor tamarin).